Reading from the N-terminus, the 359-residue chain is Phosphate acyltransferase (359 aa).

This sequence belongs to the PlsX family. Homodimer. Probably interacts with PlsY.

The protein localises to the cytoplasm. It carries out the reaction a fatty acyl-[ACP] + phosphate = an acyl phosphate + holo-[ACP]. It participates in lipid metabolism; phospholipid metabolism. Functionally, catalyzes the reversible formation of acyl-phosphate (acyl-PO(4)) from acyl-[acyl-carrier-protein] (acyl-ACP). This enzyme utilizes acyl-ACP as fatty acyl donor, but not acyl-CoA. In Salmonella heidelberg (strain SL476), this protein is Phosphate acyltransferase.